A 267-amino-acid chain; its full sequence is Mediator of RNA polymerase II transcription subunit 8 (267 aa).

2 coiled-coil regions span residues 1-26 and 116-160; these read MQRE…KNSL and DVEE…EERE. Residues 190-267 form a disordered region; sequence GLSNRRPPGQ…KSASMHPYQR (78 aa). Residues 227–245 show a composition bias toward polar residues; it reads PPNQQQQHMAGVSMSQGSQ.

Belongs to the Mediator complex subunit 8 family. As to quaternary structure, component of the Mediator complex. May be part of a multisubunit E3 ubiquitin-protein ligase complex.

Its subcellular location is the nucleus. The protein operates within protein modification; protein ubiquitination. Functionally, component of the Mediator complex, a coactivator involved in the regulated transcription of nearly all RNA polymerase II-dependent genes. Mediator functions as a bridge to convey information from gene-specific regulatory proteins to the basal RNA polymerase II transcription machinery. Mediator is recruited to promoters by direct interactions with regulatory proteins and serves as a scaffold for the assembly of a functional preinitiation complex with RNA polymerase II and the general transcription factors. May play a role as a target recruitment subunit in E3 ubiquitin-protein ligase complexes and thus in ubiquitination and subsequent proteasomal degradation of target proteins. The sequence is that of Mediator of RNA polymerase II transcription subunit 8 (med8) from Xenopus tropicalis (Western clawed frog).